Here is a 400-residue protein sequence, read N- to C-terminus: Formate-dependent phosphoribosylglycinamide formyltransferase (400 aa).

N(1)-(5-phospho-beta-D-ribosyl)glycinamide-binding positions include 22–23 (EL) and E82. ATP is bound by residues R115, K156, 161-166 (SSGKGQ), 196-199 (EGFI), and E204. The region spanning 120 to 309 (RLAAETLGLP…EFALHARAIL (190 aa)) is the ATP-grasp domain. Mg(2+) is bound by residues E268 and E280. Residues D287, K361, and 368–369 (RR) each bind N(1)-(5-phospho-beta-D-ribosyl)glycinamide.

This sequence belongs to the PurK/PurT family. Homodimer.

It catalyses the reaction N(1)-(5-phospho-beta-D-ribosyl)glycinamide + formate + ATP = N(2)-formyl-N(1)-(5-phospho-beta-D-ribosyl)glycinamide + ADP + phosphate + H(+). It functions in the pathway purine metabolism; IMP biosynthesis via de novo pathway; N(2)-formyl-N(1)-(5-phospho-D-ribosyl)glycinamide from N(1)-(5-phospho-D-ribosyl)glycinamide (formate route): step 1/1. In terms of biological role, involved in the de novo purine biosynthesis. Catalyzes the transfer of formate to 5-phospho-ribosyl-glycinamide (GAR), producing 5-phospho-ribosyl-N-formylglycinamide (FGAR). Formate is provided by PurU via hydrolysis of 10-formyl-tetrahydrofolate. This is Formate-dependent phosphoribosylglycinamide formyltransferase from Xanthomonas axonopodis pv. citri (strain 306).